The chain runs to 638 residues: uncharacterized protein (638 aa).

This is an uncharacterized protein from Homo sapiens (Human).